The primary structure comprises 1670 residues: Protein TASOR (1670 aa).

The disordered stretch occupies residues 1–110 (MATAVETEAC…QIPRKSREKK (110 aa)). At Ala2 the chain carries N-acetylalanine. Positions 67–78 (QSLSHEQPQDSS) are enriched in polar residues. At Ser344 the chain carries Phosphoserine. Lys586 participates in a covalent cross-link: Glycyl lysine isopeptide (Lys-Gly) (interchain with G-Cter in SUMO2). Ser633, Ser636, Ser673, and Ser800 each carry phosphoserine. Glycyl lysine isopeptide (Lys-Gly) (interchain with G-Cter in SUMO2) cross-links involve residues Lys823 and Lys832. Position 843 is a phosphoserine (Ser843). A Glycyl lysine isopeptide (Lys-Gly) (interchain with G-Cter in SUMO2) cross-link involves residue Lys872. Residues 921–947 (TGGNARSPEDQLGKHGEKQTPGMKSPE) form a disordered region. Residues Ser927, Ser971, and Ser979 each carry the phosphoserine modification. The span at 927–938 (SPEDQLGKHGEK) shows a compositional bias: basic and acidic residues. Thr982 and Thr1049 each carry phosphothreonine. Ser1103 carries the phosphoserine modification. Residues 1532-1545 (ETKGSRGTDQKKNT) are compositionally biased toward basic and acidic residues. 2 disordered regions span residues 1532–1558 (ETKGSRGTDQKKNTQIELQSSPDVQNS) and 1638–1670 (FLSAYTESLDRDKSPPPLSWGKSDSSRPYSQEK). 2 stretches are compositionally biased toward polar residues: residues 1546–1558 (QIELQSSPDVQNS) and 1659–1670 (KSDSSRPYSQEK). Phosphoserine is present on Ser1552.

The protein belongs to the TASOR family. In terms of assembly, component of the HUSH complex; at least composed of TASOR, PPHLN1 and MPHOSPH8. Interacts with MORC2; the interaction associateS MORC2 with the HUSH complex which recruits MORC2 to heterochromatic loci. Interacts with ZNF638; leading to recruitment of the HUSH complex to unintegrated retroviral DNA. Interacts with INPP5A, EML1, SV1L, GPSM2, ITGB3BP, CNTN1, ETFA, PSMD8, S100A10, MPHOSPH8, TMEM100, ALB, PARPBP, HCFC2, NCBP1 and SETDB1.

It is found in the nucleus. Its subcellular location is the chromosome. Component of the HUSH complex, a multiprotein complex that mediates epigenetic repression. The HUSH complex is recruited to genomic loci rich in H3K9me3 and is required to maintain transcriptional silencing by promoting recruitment of SETDB1, a histone methyltransferase that mediates further deposition of H3K9me3, as well as MORC2. Also represses L1 retrotransposons in collaboration with MORC2 and, probably, SETDB1, the silencing is dependent of repressive epigenetic modifications, such as H3K9me3 mark. Silencing events often occur within introns of transcriptionally active genes, and lead to the down-regulation of host gene expression. The HUSH complex is also involved in the silencing of unintegrated retroviral DNA by being recruited by ZNF638: some part of the retroviral DNA formed immediately after infection remains unintegrated in the host genome and is transcriptionally repressed. Plays a crucial role in early embryonic development. Involved in the organization of spindle poles and spindle apparatus assembly during zygotic division. Plays an important role in maintaining epiblast fitness or potency. The protein is Protein TASOR of Homo sapiens (Human).